The following is a 247-amino-acid chain: MNVLSCSINTLNGLYDISGVEVGQHFYWKIGGFQVHGQVLITSWVVIAILLASATLAVRNPQTIPTSGQNFFEYVLEFIRDVSKTQIGEEYGPWVPFIGTMFLFIFVSNWSGALLPWKIIQLPHGELAAPTNDINTTVALALLTSVAYFYAGLSKKGLGYFGKYIQPTPILLPINILEDFTKPLSLSFRLFGNILADELVVVVLVSLVPSVVPIPVMFLGLFTSGIQALIFATLAAAYIGESMEGHH.

A run of 5 helical transmembrane segments spans residues 38-58, 95-115, 134-154, 199-219, and 220-240; these read QVLITSWVVIAILLASATLAV, VPFIGTMFLFIFVSNWSGALL, INTTVALALLTSVAYFYAGLS, LVVVVLVSLVPSVVPIPVMFL, and GLFTSGIQALIFATLAAAYIG.

The protein belongs to the ATPase A chain family. As to quaternary structure, F-type ATPases have 2 components, CF(1) - the catalytic core - and CF(0) - the membrane proton channel. CF(1) has five subunits: alpha(3), beta(3), gamma(1), delta(1), epsilon(1). CF(0) has four main subunits: a, b, b' and c.

It localises to the plastid. The protein localises to the chloroplast thylakoid membrane. In terms of biological role, key component of the proton channel; it plays a direct role in the translocation of protons across the membrane. This is ATP synthase subunit a, chloroplastic from Lactuca sativa (Garden lettuce).